Here is a 300-residue protein sequence, read N- to C-terminus: Diphthine methyl ester synthase (300 aa).

S-adenosyl-L-methionine contacts are provided by residues L9, D85, G88, 113–114 (SV), L164, L222, and H247.

Belongs to the diphthine synthase family.

It localises to the cytoplasm. It catalyses the reaction 2-[(3S)-amino-3-carboxypropyl]-L-histidyl-[translation elongation factor 2] + 4 S-adenosyl-L-methionine = diphthine methyl ester-[translation elongation factor 2] + 4 S-adenosyl-L-homocysteine + 3 H(+). It functions in the pathway protein modification; peptidyl-diphthamide biosynthesis. Its function is as follows. S-adenosyl-L-methionine-dependent methyltransferase that catalyzes four methylations of the modified target histidine residue in translation elongation factor 2 (EF-2), to form an intermediate called diphthine methyl ester. The four successive methylation reactions represent the second step of diphthamide biosynthesis. In Yarrowia lipolytica (strain CLIB 122 / E 150) (Yeast), this protein is Diphthine methyl ester synthase (DPH5).